Reading from the N-terminus, the 142-residue chain is Phenylalanine ammonia-lyase (142 aa).

Positions 66, 94, and 97 each coordinate (E)-cinnamate.

This sequence belongs to the PAL/histidase family. As to quaternary structure, homotetramer. Contains an active site 4-methylidene-imidazol-5-one (MIO), which is formed autocatalytically by cyclization and dehydration of residues Ala-Ser-Gly.

It is found in the cytoplasm. The catalysed reaction is L-phenylalanine = (E)-cinnamate + NH4(+). The protein operates within phenylpropanoid metabolism; trans-cinnamate biosynthesis; trans-cinnamate from L-phenylalanine: step 1/1. Functionally, catalyzes the non-oxidative deamination of L-phenylalanine to form trans-cinnamic acid and a free ammonium ion. Facilitates the commitment step in phenylpropanoid pathways that produce secondary metabolites such as lignins, coumarins and flavonoids. The sequence is that of Phenylalanine ammonia-lyase (palA) from Agaricus bisporus (White button mushroom).